Consider the following 139-residue polypeptide: MHRVTVTLDDDLMKKLDAIIEARGYQNRSEAIRDLARIGIQQTSAHASAEHCVGAMVYTYDHSKRDLPRKLTQSFHNHHELSRATMHVHLDHDQCLEVTILDGKANEIQHFADHIFSERGVRYGRLVTIPTSGDGHAHD.

Residues His76, His87, His89, and Cys95 each coordinate Ni(2+).

The protein belongs to the transcriptional regulatory CopG/NikR family. Ni(2+) serves as cofactor.

Functionally, transcriptional regulator. The polypeptide is Putative nickel-responsive regulator (Rhodopseudomonas palustris (strain HaA2)).